The primary structure comprises 277 residues: Tumor necrosis factor receptor superfamily member 4 (277 aa).

Residues 1–28 form the signal peptide; that stretch reads MCVGARRLGRGPCAALLLLGLGLSTVTG. The Extracellular segment spans residues 29 to 214; that stretch reads LHCVGDTYPS…RPVEVPGGRA (186 aa). TNFR-Cys repeat units lie at residues 30 to 65 and 66 to 107; these read HCVG…TVCR and PCGP…DTVC. Disulfide bonds link Cys-31–Cys-42, Cys-43–Cys-56, Cys-46–Cys-64, Cys-67–Cys-81, Cys-84–Cys-99, Cys-87–Cys-107, Cys-109–Cys-125, and Cys-128–Cys-141. The TNFR-Cys 3; truncated repeat unit spans residues 108–126; that stretch reads RCRAGTQPLDSYKPGVDCA. One copy of the TNFR-Cys 4 repeat lies at 127-167; the sequence is PCPPGHFSPGDNQACKPWTNCTLAGKHTLQPASNSSDAICE. Asn-146 and Asn-160 each carry an N-linked (GlcNAc...) asparagine glycan. Residues Cys-147 and Cys-166 are joined by a disulfide bond. A disordered region spans residues 158 to 209; it reads ASNSSDAICEDRDPPATQPQETQGPPARPITVQPTEAWPRTSQGPSTRPVEV. Residues 215-235 traverse the membrane as a helical segment; it reads VAAILGLGLVLGLLGPLAILL. Residues 236 to 277 lie on the Cytoplasmic side of the membrane; sequence ALYLLRRDQRLPPDAHKPPGGGSFRTPIQEEQADAHSTLAKI. Residues 248–277 form a disordered region; that stretch reads PDAHKPPGGGSFRTPIQEEQADAHSTLAKI.

In terms of assembly, interacts with TRAF2, TRAF3 and TRAF5. As to quaternary structure, (Microbial infection) Interacts with Human herpesvirus 6B/HHV-6B gQ1:gQ2 proteins.

The protein localises to the membrane. Its function is as follows. Receptor for TNFSF4/OX40L/GP34. Is a costimulatory molecule implicated in long-term T-cell immunity. Functionally, (Microbial infection) Acts as a receptor for human herpesvirus 6B/HHV-6B. This chain is Tumor necrosis factor receptor superfamily member 4 (TNFRSF4), found in Homo sapiens (Human).